The chain runs to 332 residues: Cysteine and histidine-rich domain-containing protein 1 (332 aa).

The residue at position 2 (A2) is an N-acetylalanine. The tract at residues 2–77 (ALLCYNRGCG…KPPESVKPEV (76 aa)) is interaction with PPP5C. The Zn(2+) site is built by C5, C10, C24, H27, C42, and C43. CHORD domains lie at 5-64 (CYNR…KGRH) and 157-216 (CKNG…KGKH). At T47 the chain carries Phosphothreonine. S51 is modified (phosphoserine). Residues C59, H64, C157, C162, C176, H179, C194, C195, C211, and H216 each coordinate Zn(2+). The segment at 62–81 (GRHNSEKPPESVKPEVKTTE) is disordered. Positions 64–81 (HNSEKPPESVKPEVKTTE) are enriched in basic and acidic residues. The interaction with HSP90AA1 and HSP90AB1 stretch occupies residues 65 to 316 (NSEKPPESVK…AEPMQWASLE (252 aa)). The CS domain occupies 227-316 (VVPCRHDWHQ…AEPMQWASLE (90 aa)).

In terms of assembly, interacts with HSP90AA1, HSP90AB1, PPP5C, ROCK1 and ROCK2.

In terms of biological role, regulates centrosome duplication, probably by inhibiting the kinase activity of ROCK2. Proposed to act as co-chaperone for HSP90. May play a role in the regulation of NOD1 via a HSP90 chaperone complex. In vitro, has intrinsic chaperone activity. This function may be achieved by inhibiting association of ROCK2 with NPM1. Plays a role in ensuring the localization of the tyrosine kinase receptor EGFR to the plasma membrane, and thus ensures the subsequent regulation of EGFR activity and EGF-induced actin cytoskeleton remodeling. Involved in stress response. Prevents tumorigenesis. The protein is Cysteine and histidine-rich domain-containing protein 1 (CHORDC1) of Pongo abelii (Sumatran orangutan).